The sequence spans 119 residues: Large ribosomal subunit protein bL19 (119 aa).

It belongs to the bacterial ribosomal protein bL19 family.

Its function is as follows. This protein is located at the 30S-50S ribosomal subunit interface and may play a role in the structure and function of the aminoacyl-tRNA binding site. The chain is Large ribosomal subunit protein bL19 from Sulfurovum sp. (strain NBC37-1).